Reading from the N-terminus, the 377-residue chain is Dihydroorotase, mitochondrial (377 aa).

Zn(2+)-binding residues include histidine 44, histidine 46, lysine 130, histidine 168, and histidine 206. Position 130 is an N6-carboxylysine (lysine 130). At serine 223 the chain carries Phosphoserine. Aspartate 280 lines the Zn(2+) pocket.

It belongs to the metallo-dependent hydrolases superfamily. DHOase family. Class II DHOase subfamily. Zn(2+) serves as cofactor.

The protein resides in the mitochondrion. It carries out the reaction (S)-dihydroorotate + H2O = N-carbamoyl-L-aspartate + H(+). Its pathway is pyrimidine metabolism; UMP biosynthesis via de novo pathway; (S)-dihydroorotate from bicarbonate: step 3/3. This Arabidopsis thaliana (Mouse-ear cress) protein is Dihydroorotase, mitochondrial (PYR4).